The primary structure comprises 396 residues: Penicillopepsin-1 (396 aa).

The N-terminal stretch at 1–20 (MVVFSKVTASLACFSAVVSA) is a signal peptide. A propeptide spans 21 to 72 (AAVPVKSPRQGFSVNQVQKTVTGTRTVNLPGVYANALAKYGATVPANVHAAA) (activation peptide). Residues 88-393 (YLTPVKIGES…DAEGPRLGFA (306 aa)) form the Peptidase A1 domain. Residues Asp104 and Asp285 contribute to the active site. The N-linked (GlcNAc...) asparagine glycan is linked to Asn311. A disulfide bond links Cys321 and Cys356.

This sequence belongs to the peptidase A1 family. As to quaternary structure, monomer.

It is found in the secreted. It catalyses the reaction Hydrolysis of proteins with broad specificity similar to that of pepsin A, preferring hydrophobic residues at P1 and P1', but also cleaving 20-Gly-|-Glu-21 in the B chain of insulin. Clots milk, and activates trypsinogen.. In terms of biological role, secreted aspartic endopeptidase that allows assimilation of proteinaceous substrates. The scissile peptide bond is attacked by a nucleophilic water molecule activated by two aspartic residues in the active site. Shows a broad primary substrate specificity. Favors hydrophobic residues at the P1 and P1' positions, but can also activate trypsinogen and hydrolyze the B chain of insulin between positions 'Gly-20' and 'Glu-21'. In Penicillium rubens (strain ATCC 28089 / DSM 1075 / NRRL 1951 / Wisconsin 54-1255) (Penicillium chrysogenum), this protein is Penicillopepsin-1 (pepA).